The following is a 701-amino-acid chain: MKMNLKRLVVTFFSCITFLLKFTIAAAEPPEGFPEPLNPTNFKEELSKGLHIIDFYSPYCPHCKHLAPVWMETWEEFKEESKTLNITFSQVNCIESADLCGDENIEYFPEIRLYNPSGYIKSFTETPRTKESLIAFARRESMDPNNLDTDLDSAKSESQYLEGFDFLELIAGKATRPHLVSFWPTKDMKNSDDSLEFKNCDKCHEFQRTWKIISRQLAVDDINTGHVNCESNPTICEELGFGDLVKITNHRADREPKVALVLPNKTSNNLFDYPNGYSAKSDGYVDFARRTFTNSKFPNITEGELEKKANRDIDFLQERGRVTNNDIHLVFSYDPETVVIEDFDILEYLIEPLSKIPNIYLHQIDKNLINLSRNLFGRMYEKINYDASQTQKVFNKEYFTMNTVTQLPTFFMFKDGDPISYVFPGYSTTEMRNIDAIMDWVKKYSNPLVTEVDSSNLKKLISFQTKSYSDLAIQLISSTDHKHIKGSNKLIKNLLLASWEYEHIRMENNFEEINERRARKADGIKKIKEKKAPANKIVDKMREEIPHMDQKKLLLGYLDISKEKNFFRKYGITGEYKIGDVIIIDKSNNYYYNKDNFGNSLTSNNPQLLREAFVSLNIPSKALYSSKLKGRLINSPFHNVLSFLDIIHGNGMPGYLIVIVLFIAILKGPSIYRRYKVRKHYRAKRNAVGILGNMEKKKNQD.

The N-terminal stretch at 1 to 27 (MKMNLKRLVVTFFSCITFLLKFTIAAA) is a signal peptide. In terms of domain architecture, Thioredoxin 1 spans 28-142 (EPPEGFPEPL…LIAFARRESM (115 aa)). Residues Cys60 and Cys63 are joined by a disulfide bond. N-linked (GlcNAc...) asparagine glycosylation occurs at Asn85. Cysteines 200 and 203 form a disulfide. 3 N-linked (GlcNAc...) asparagine glycosylation sites follow: Asn264, Asn299, and Asn370. Residues 408–446 (PTFFMFKDGDPISYVFPGYSTTEMRNIDAIMDWVKKYSN) form the Thioredoxin 2 domain. A helical membrane pass occupies residues 646–666 (IIHGNGMPGYLIVIVLFIAIL).

This sequence belongs to the protein disulfide isomerase family. Interacts with mutated PMA1-D378N but not wild type PMA1. Interacts with EUG1, KAR2, MPD1 and PDI1.

The protein localises to the endoplasmic reticulum membrane. It carries out the reaction Catalyzes the rearrangement of -S-S- bonds in proteins.. Its function is as follows. Acts as a membrane-bound chaperone in endoplasmic reticulum quality control. Probably facilitates presentation of substrate to membrane-bound components of the degradation machinery. The chain is ER-retained PMA1-suppressing protein 1 (EPS1) from Saccharomyces cerevisiae (strain ATCC 204508 / S288c) (Baker's yeast).